Reading from the N-terminus, the 284-residue chain is 4-diphosphocytidyl-2-C-methyl-D-erythritol kinase (284 aa).

Lys9 is an active-site residue. ATP is bound at residue 90–100 (PLVSGLGGDSS). The active site involves Asp132.

Belongs to the GHMP kinase family. IspE subfamily.

It catalyses the reaction 4-CDP-2-C-methyl-D-erythritol + ATP = 4-CDP-2-C-methyl-D-erythritol 2-phosphate + ADP + H(+). The protein operates within isoprenoid biosynthesis; isopentenyl diphosphate biosynthesis via DXP pathway; isopentenyl diphosphate from 1-deoxy-D-xylulose 5-phosphate: step 3/6. In terms of biological role, catalyzes the phosphorylation of the position 2 hydroxy group of 4-diphosphocytidyl-2C-methyl-D-erythritol. The protein is 4-diphosphocytidyl-2-C-methyl-D-erythritol kinase of Dehalococcoides mccartyi (strain ATCC BAA-2100 / JCM 16839 / KCTC 5957 / BAV1).